Consider the following 147-residue polypeptide: Hemoglobin subunit beta-Y (147 aa).

Residues 3 to 147 (HFTAEEKAAI…VANALSLKYH (145 aa)) enclose the Globin domain. Positions 64 and 93 each coordinate heme b.

Belongs to the globin family. In terms of assembly, heterotetramer of two alpha chains and two beta chains.

This is a minor early embryonic beta chain. In Mesocricetus auratus (Golden hamster), this protein is Hemoglobin subunit beta-Y (HBBY).